A 372-amino-acid polypeptide reads, in one-letter code: tRNA-specific 2-thiouridylase MnmA (372 aa).

ATP is bound by residues 11–18 (GMSGGVDS) and Met37. An interaction with target base in tRNA region spans residues 97 to 99 (NPD). Catalysis depends on Cys102, which acts as the Nucleophile. Cys102 and Cys199 are joined by a disulfide. Residue Gly126 coordinates ATP. Residues 149–151 (KDQ) are interaction with tRNA. Cys199 (cysteine persulfide intermediate) is an active-site residue. Residues 309–310 (RY) are interaction with tRNA.

Belongs to the MnmA/TRMU family.

The protein localises to the cytoplasm. It catalyses the reaction S-sulfanyl-L-cysteinyl-[protein] + uridine(34) in tRNA + AH2 + ATP = 2-thiouridine(34) in tRNA + L-cysteinyl-[protein] + A + AMP + diphosphate + H(+). In terms of biological role, catalyzes the 2-thiolation of uridine at the wobble position (U34) of tRNA, leading to the formation of s(2)U34. The protein is tRNA-specific 2-thiouridylase MnmA of Staphylococcus aureus (strain MSSA476).